We begin with the raw amino-acid sequence, 149 residues long: Transcriptional repressor NrdR (149 aa).

The segment at 3-34 is a zinc-finger region; the sequence is CPFCFAVDTKVIDSRLVGEGSSVRRRRQCLVC. The ATP-cone domain occupies 49 to 139; sequence PRVVKSNDVR…VYRSFEDIKE (91 aa).

This sequence belongs to the NrdR family. Zn(2+) serves as cofactor.

Negatively regulates transcription of bacterial ribonucleotide reductase nrd genes and operons by binding to NrdR-boxes. The sequence is that of Transcriptional repressor NrdR from Escherichia coli O139:H28 (strain E24377A / ETEC).